We begin with the raw amino-acid sequence, 363 residues long: Cyanuric acid amidohydrolase (363 aa).

The tract at residues 1 to 104 (MYHIDVFRIP…TVFARRPAID (104 aa)) is RU A. Substrate contacts are provided by residues Arg-52 and 83 to 84 (SG). An RU B region spans residues 112-249 (RLTLGIAFTR…NVVIAIGMSE (138 aa)). The active site involves Lys-162. Substrate contacts are provided by residues Arg-194 and 232-233 (SA). The active-site Nucleophile is the Ser-232. The RU C stretch occupies residues 255–363 (LVIAHGVMSD…GGPFAVIARA (109 aa)). Mg(2+) is bound at residue Glu-297. Residues Arg-324 and 343 to 344 (SG) contribute to the substrate site. Ala-346, Gln-349, Gly-350, Pro-351, and Gly-354 together coordinate Mg(2+).

It belongs to the cyclic amide hydrolase (CyAH) family. Homotetramer.

It catalyses the reaction cyanurate + H2O = 1-carboxybiuret + H(+). The protein operates within xenobiotic degradation; atrazine degradation; biuret from cyanurate: step 1/1. Inhibited by barbituric acid. In terms of biological role, responsible for the hydrolysis of cyanuric acid, an intermediate formed during catabolism of s-triazine based compounds in herbicides such as atrazine and polymers such as melamine. Catalyzes the hydrolytic opening of the s-triazine ring of cyanuric acid (2,4,6-trihydroxy-s-triazine) to yield carbon dioxide and carboxybiuret, which spontaneously decarboxylates to biuret. The protein is Cyanuric acid amidohydrolase (atzD) of Pseudomonas sp. (strain ADP).